We begin with the raw amino-acid sequence, 1034 residues long: Presequence protease, mitochondrial (1034 aa).

A mitochondrion-targeting transit peptide spans Met-1–Ser-26. His-97 contacts Zn(2+). Residue Glu-100 is the Proton acceptor of the active site. Zn(2+) is bound at residue His-101. Glu-173 is a catalytic residue. Glu-198 lines the Zn(2+) pocket.

It belongs to the peptidase M16 family. PreP subfamily. Monomer and homodimer; homodimerization is induced by binding of the substrate. Zn(2+) is required as a cofactor.

It localises to the mitochondrion intermembrane space. It is found in the mitochondrion matrix. In terms of biological role, degrades mitochondrial transit peptides after their cleavage in the intermembrane space or in the matrix, and presequence peptides; clearance of these peptides is required to keep the presequence processing machinery running. Preferentially cleaves the N-terminal side of paired basic amino acid residues. Also degrades other unstructured peptides. May function as an ATP-dependent peptidase as opposed to a metalloendopeptidase. In Candida albicans (strain SC5314 / ATCC MYA-2876) (Yeast), this protein is Presequence protease, mitochondrial (CYM1).